The chain runs to 1080 residues: ATP-dependent helicase/deoxyribonuclease subunit B (1080 aa).

It belongs to the helicase family. AddB/RexB type 2 subfamily. Heterodimer of AddA and RexB. The cofactor is Mg(2+).

In terms of biological role, the heterodimer acts as both an ATP-dependent DNA helicase and an ATP-dependent, dual-direction single-stranded exonuclease. Recognizes the chi site generating a DNA molecule suitable for the initiation of homologous recombination. This subunit has 5' -&gt; 3' nuclease activity but not helicase activity. This chain is ATP-dependent helicase/deoxyribonuclease subunit B, found in Streptococcus mutans serotype c (strain ATCC 700610 / UA159).